A 295-amino-acid polypeptide reads, in one-letter code: 4-hydroxy-tetrahydrodipicolinate synthase (295 aa).

Pyruvate is bound at residue T47. The active-site Proton donor/acceptor is Y135. K163 functions as the Schiff-base intermediate with substrate in the catalytic mechanism. A pyruvate-binding site is contributed by I206.

The protein belongs to the DapA family. Homodimer.

The protein localises to the cytoplasm. The catalysed reaction is L-aspartate 4-semialdehyde + pyruvate = (2S,4S)-4-hydroxy-2,3,4,5-tetrahydrodipicolinate + H2O + H(+). It participates in amino-acid biosynthesis; L-lysine biosynthesis via DAP pathway; (S)-tetrahydrodipicolinate from L-aspartate: step 3/4. In terms of biological role, catalyzes the condensation of (S)-aspartate-beta-semialdehyde [(S)-ASA] and pyruvate to 4-hydroxy-tetrahydrodipicolinate (HTPA). The polypeptide is 4-hydroxy-tetrahydrodipicolinate synthase (Staphylococcus saprophyticus subsp. saprophyticus (strain ATCC 15305 / DSM 20229 / NCIMB 8711 / NCTC 7292 / S-41)).